The following is a 139-amino-acid chain: MIKRYEACFLFKSEEIEYKCSLEEVRKSLEFFGAIDIVSNFIGERALEYPIKKQARGRYEIIEFSMEGNNLKELESRLKLIKNLLRYMILVKIVRKINTKKIKRRNFREFRDNVDKESFKGGSKIETPTGSESTDIQEK.

A disordered region spans residues 118 to 139; sequence SFKGGSKIETPTGSESTDIQEK. The span at 126–139 shows a compositional bias: polar residues; that stretch reads ETPTGSESTDIQEK.

It belongs to the bacterial ribosomal protein bS6 family.

Functionally, binds together with bS18 to 16S ribosomal RNA. The protein is Small ribosomal subunit protein bS6 of Borrelia garinii subsp. bavariensis (strain ATCC BAA-2496 / DSM 23469 / PBi) (Borreliella bavariensis).